The primary structure comprises 252 residues: Phosphate import ATP-binding protein PstB (252 aa).

The region spanning Ile-6–Ile-247 is the ABC transporter domain. Gly-38–Ser-45 is an ATP binding site.

The protein belongs to the ABC transporter superfamily. Phosphate importer (TC 3.A.1.7) family. The complex is composed of two ATP-binding proteins (PstB), two transmembrane proteins (PstC and PstA) and a solute-binding protein (PstS).

The protein resides in the cell inner membrane. The catalysed reaction is phosphate(out) + ATP + H2O = ADP + 2 phosphate(in) + H(+). Functionally, part of the ABC transporter complex PstSACB involved in phosphate import. Responsible for energy coupling to the transport system. The sequence is that of Phosphate import ATP-binding protein PstB from Bacteroides thetaiotaomicron (strain ATCC 29148 / DSM 2079 / JCM 5827 / CCUG 10774 / NCTC 10582 / VPI-5482 / E50).